The following is a 475-amino-acid chain: Aspartyl/glutamyl-tRNA(Asn/Gln) amidotransferase subunit B (475 aa).

This sequence belongs to the GatB/GatE family. GatB subfamily. As to quaternary structure, heterotrimer of A, B and C subunits.

The catalysed reaction is L-glutamyl-tRNA(Gln) + L-glutamine + ATP + H2O = L-glutaminyl-tRNA(Gln) + L-glutamate + ADP + phosphate + H(+). The enzyme catalyses L-aspartyl-tRNA(Asn) + L-glutamine + ATP + H2O = L-asparaginyl-tRNA(Asn) + L-glutamate + ADP + phosphate + 2 H(+). Its function is as follows. Allows the formation of correctly charged Asn-tRNA(Asn) or Gln-tRNA(Gln) through the transamidation of misacylated Asp-tRNA(Asn) or Glu-tRNA(Gln) in organisms which lack either or both of asparaginyl-tRNA or glutaminyl-tRNA synthetases. The reaction takes place in the presence of glutamine and ATP through an activated phospho-Asp-tRNA(Asn) or phospho-Glu-tRNA(Gln). This is Aspartyl/glutamyl-tRNA(Asn/Gln) amidotransferase subunit B from Thermoanaerobacter sp. (strain X514).